The chain runs to 153 residues: Large ribosomal subunit protein uL30 (153 aa).

It belongs to the universal ribosomal protein uL30 family. In terms of assembly, part of the 50S ribosomal subunit.

The polypeptide is Large ribosomal subunit protein uL30 (Methanosarcina mazei (strain ATCC BAA-159 / DSM 3647 / Goe1 / Go1 / JCM 11833 / OCM 88) (Methanosarcina frisia)).